Reading from the N-terminus, the 1055-residue chain is DIS3-like exonuclease 2 (1055 aa).

Disordered regions lie at residues 1–109 (MKSA…SSPE) and 229–249 (SAAKPEGTNSPPEKDDKKARQ). The segment covering 17 to 32 (HKKKRNRPQKQNRRSK) has biased composition (basic residues). Basic and acidic residues predominate over residues 39–59 (EDAHVEESLDGRDSSRSKAKD). Residues 97–108 (PRRSASPLLSSP) are compositionally biased toward low complexity. The Mg(2+) site is built by Asp488 and Asp497.

The protein belongs to the RNR ribonuclease family. DIS3L2 subfamily. It depends on Mg(2+) as a cofactor. Mn(2+) serves as cofactor. Widely expressed.

The protein resides in the cytoplasm. It is found in the P-body. In terms of biological role, 3'-5'-exoribonuclease that specifically recognizes RNAs polyuridylated at their 3' end and mediates their degradation. Component of an exosome-independent RNA degradation pathway that mediates degradation of cytoplasmic mRNAs that have been deadenylated and subsequently uridylated at their 3'. The sequence is that of DIS3-like exonuclease 2 (SOV) from Arabidopsis thaliana (Mouse-ear cress).